The chain runs to 72 residues: SRY-related protein ADW5 (72 aa).

Positions 1 to 69 (VKRPMNAFMV…KHMADYPDYK (69 aa)) form a DNA-binding region, HMG box.

It is found in the nucleus. This is SRY-related protein ADW5 from Alligator mississippiensis (American alligator).